The sequence spans 450 residues: C4-dicarboxylate transport protein (450 aa).

Helical transmembrane passes span 25-45 (VVFA…YGAA), 56-76 (LIKM…IASM), 90-110 (MAYF…VANV), 162-182 (ILQV…VGDA), 200-220 (LVNI…AFTI), 234-254 (LVLT…GAVA), 319-339 (IYMT…LTLG), and 367-387 (AATL…ILGV).

Belongs to the dicarboxylate/amino acid:cation symporter (DAACS) (TC 2.A.23) family.

It localises to the cell inner membrane. Responsible for the transport of dicarboxylates such as succinate, fumarate, and malate from the periplasm across the membrane. This is C4-dicarboxylate transport protein from Acidovorax sp. (strain JS42).